The following is a 191-amino-acid chain: Inosine triphosphate pyrophosphatase (191 aa).

Threonine 12–lysine 17 is a binding site for ITP. Glutamate 40 contacts Mg(2+). Residues lysine 52, aspartate 68–serine 69, lysine 85, phenylalanine 144–glutamate 147, lysine 167, and histidine 172–arginine 173 each bind ITP.

It belongs to the HAM1 NTPase family. Homodimer. Mg(2+) serves as cofactor. Requires Mn(2+) as cofactor.

Its subcellular location is the cytoplasm. The protein localises to the nucleus. The catalysed reaction is ITP + H2O = IMP + diphosphate + H(+). It catalyses the reaction dITP + H2O = dIMP + diphosphate + H(+). It carries out the reaction XTP + H2O = XMP + diphosphate + H(+). Its function is as follows. Pyrophosphatase that hydrolyzes non-canonical purine nucleotides such as inosine triphosphate (ITP), deoxyinosine triphosphate (dITP) or xanthosine 5'-triphosphate (XTP) to their respective monophosphate derivatives. The enzyme does not distinguish between the deoxy- and ribose forms. Probably excludes non-canonical purines from RNA and DNA precursor pools, thus preventing their incorporation into RNA and DNA and avoiding chromosomal lesions. This Aspergillus oryzae (strain ATCC 42149 / RIB 40) (Yellow koji mold) protein is Inosine triphosphate pyrophosphatase.